A 72-amino-acid polypeptide reads, in one-letter code: MSKEEAIEVEGTVIEPLPNAMFRVELENGHVVLAHISGKMRKYFIKILPGDKVTVELSPYDLTRGRITYRAK.

Residues 1-72 (MSKEEAIEVE…TRGRITYRAK (72 aa)) enclose the S1-like domain.

Belongs to the IF-1 family. In terms of assembly, component of the 30S ribosomal translation pre-initiation complex which assembles on the 30S ribosome in the order IF-2 and IF-3, IF-1 and N-formylmethionyl-tRNA(fMet); mRNA recruitment can occur at any time during PIC assembly.

The protein localises to the cytoplasm. Functionally, one of the essential components for the initiation of protein synthesis. Stabilizes the binding of IF-2 and IF-3 on the 30S subunit to which N-formylmethionyl-tRNA(fMet) subsequently binds. Helps modulate mRNA selection, yielding the 30S pre-initiation complex (PIC). Upon addition of the 50S ribosomal subunit IF-1, IF-2 and IF-3 are released leaving the mature 70S translation initiation complex. In Geobacter sulfurreducens (strain ATCC 51573 / DSM 12127 / PCA), this protein is Translation initiation factor IF-1.